The sequence spans 99 residues: Putative GIY-YIG domain-containing protein 242L (99 aa).

Positions 5 to 81 constitute a GIY-YIG domain; sequence NGWNIYMVTM…KKQTKKVKLQ (77 aa).

The protein is Putative GIY-YIG domain-containing protein 242L of Invertebrate iridescent virus 6 (IIV-6).